The following is a 402-amino-acid chain: Phosphopentomutase (402 aa).

Residues aspartate 10, aspartate 301, histidine 306, aspartate 342, histidine 343, and histidine 354 each contribute to the Mn(2+) site.

It belongs to the phosphopentomutase family. Mn(2+) serves as cofactor.

Its subcellular location is the cytoplasm. It carries out the reaction 2-deoxy-alpha-D-ribose 1-phosphate = 2-deoxy-D-ribose 5-phosphate. The enzyme catalyses alpha-D-ribose 1-phosphate = D-ribose 5-phosphate. The protein operates within carbohydrate degradation; 2-deoxy-D-ribose 1-phosphate degradation; D-glyceraldehyde 3-phosphate and acetaldehyde from 2-deoxy-alpha-D-ribose 1-phosphate: step 1/2. Its function is as follows. Isomerase that catalyzes the conversion of deoxy-ribose 1-phosphate (dRib-1-P) and ribose 1-phosphate (Rib-1-P) to deoxy-ribose 5-phosphate (dRib-5-P) and ribose 5-phosphate (Rib-5-P), respectively. In Aeromonas hydrophila subsp. hydrophila (strain ATCC 7966 / DSM 30187 / BCRC 13018 / CCUG 14551 / JCM 1027 / KCTC 2358 / NCIMB 9240 / NCTC 8049), this protein is Phosphopentomutase.